Consider the following 971-residue polypeptide: Exportin-2 (971 aa).

Methionine 1 is subject to N-acetylmethionine. An Importin N-terminal domain is found at 29–102; sequence AEKFLESVEG…KANIVHLMLS (74 aa). Phosphoserine is present on serine 112. An N6-acetyllysine mark is found at lysine 574 and lysine 824. Position 931 is a phosphoserine (serine 931).

Belongs to the XPO2/CSE1 family. In terms of assembly, found in a complex with CSE1L/XPO2, Ran and KPNA2. Binds with high affinity to importin-alpha only in the presence of RanGTP. The complex is dissociated by the combined action of RanBP1 and RanGAP1. Interacts with CFTR.

It is found in the cytoplasm. The protein localises to the nucleus. Functionally, export receptor for importin-alpha. Mediates importin-alpha re-export from the nucleus to the cytoplasm after import substrates (cargos) have been released into the nucleoplasm. In the nucleus binds cooperatively to importin-alpha and to the GTPase Ran in its active GTP-bound form. Docking of this trimeric complex to the nuclear pore complex (NPC) is mediated through binding to nucleoporins. Upon transit of a nuclear export complex into the cytoplasm, disassembling of the complex and hydrolysis of Ran-GTP to Ran-GDP (induced by RANBP1 and RANGAP1, respectively) cause release of the importin-alpha from the export receptor. CSE1L/XPO2 then return to the nuclear compartment and mediate another round of transport. The directionality of nuclear export is thought to be conferred by an asymmetric distribution of the GTP- and GDP-bound forms of Ran between the cytoplasm and nucleus. In Bos taurus (Bovine), this protein is Exportin-2 (CSE1L).